The sequence spans 181 residues: MSADENNLIWIDLEMTGLDPERDRIIEIATLVTDANLNILAEGPTIAVHQSDAQLALMDDWNVRTHTGSGLVERVKASTQGDREAELATIEFLKQWIPAGKSPICGNSIGQDRRFLFKYMPELEAYFHYRYLDVSTLKELARRWKPEILDGFKKQGTHQAMDDIRESVAELAFYRENFIKL.

The region spanning 8 to 171 (LIWIDLEMTG…DDIRESVAEL (164 aa)) is the Exonuclease domain. Y129 is a catalytic residue.

Belongs to the oligoribonuclease family.

It is found in the cytoplasm. In terms of biological role, 3'-to-5' exoribonuclease specific for small oligoribonucleotides. This is Oligoribonuclease from Enterobacter sp. (strain 638).